Reading from the N-terminus, the 499-residue chain is Dual specificity protein kinase CLK2 (499 aa).

A disordered region spans residues methionine 1–aspartate 65. The span at histidine 8–glutamine 23 shows a compositional bias: basic and acidic residues. Over residues serine 24–arginine 33 the composition is skewed to basic residues. Position 34 is a phosphoserine; by PKB/AKT1 (serine 34). Positions arginine 47–aspartate 65 are enriched in basic and acidic residues. Serine 98 carries the post-translational modification Phosphoserine; by autocatalysis. Tyrosine 99 bears the Phosphotyrosine; by autocatalysis mark. Positions histidine 102–valine 142 are disordered. A compositionally biased stretch (basic residues) spans arginine 112–threonine 127. Threonine 127 is subject to Phosphothreonine; by PKB/AKT1. Serine 141 is modified (phosphoserine; by autocatalysis). Tyrosine 152 is subject to Phosphotyrosine. The region spanning glutamate 163–alanine 479 is the Protein kinase domain. ATP contacts are provided by residues leucine 168–valine 176 and lysine 192. The active-site Proton acceptor is the aspartate 289. Threonine 343 carries the post-translational modification Phosphothreonine; by PKB/AKT2.

This sequence belongs to the protein kinase superfamily. CMGC Ser/Thr protein kinase family. Lammer subfamily. Interacts with RBMX and UBL5. Interacts with AKT1. In terms of processing, autophosphorylates on all three types of residues. Phosphorylation on Ser-34 and Thr-127 by AKT1 is induced by ionizing radiation or insulin. Phosphorylation plays a critical role in cell proliferation following low dose radiation and prevents cell death following high dose radiation. Phosphorylation at Thr-343 by PKB/AKT2 induces its kinase activity which is required for its stability. The phosphorylation status at Ser-141 influences its subnuclear localization; inhibition of phosphorylation at Ser-141 results in accumulation in the nuclear speckle.

Its subcellular location is the nucleus. The protein localises to the nucleus speckle. It carries out the reaction L-seryl-[protein] + ATP = O-phospho-L-seryl-[protein] + ADP + H(+). The catalysed reaction is L-threonyl-[protein] + ATP = O-phospho-L-threonyl-[protein] + ADP + H(+). It catalyses the reaction L-tyrosyl-[protein] + ATP = O-phospho-L-tyrosyl-[protein] + ADP + H(+). 5,6-dichloro-1-b-D-ribofuranosylbenzimidazole (DRB) inhibits autophosphorylation. TG003 inhibits its kinase activity and affects the regulation of alternative splicing mediated by phosphorylation of SR proteins. Functionally, dual specificity kinase acting on both serine/threonine and tyrosine-containing substrates. Phosphorylates serine- and arginine-rich (SR) proteins of the spliceosomal complex. May be a constituent of a network of regulatory mechanisms that enable SR proteins to control RNA splicing and can cause redistribution of SR proteins from speckles to a diffuse nucleoplasmic distribution. Acts as a suppressor of hepatic gluconeogenesis and glucose output by repressing PPARGC1A transcriptional activity on gluconeogenic genes via its phosphorylation. Phosphorylates PPP2R5B thereby stimulating the assembly of PP2A phosphatase with the PPP2R5B-AKT1 complex leading to dephosphorylation of AKT1. Phosphorylates: PTPN1, SRSF1 and SRSF3. Regulates the alternative splicing of tissue factor (F3) pre-mRNA in endothelial cells. Phosphorylates PAGE4 at several serine and threonine residues and this phosphorylation attenuates the ability of PAGE4 to potentiate the transcriptional activator activity of JUN. The polypeptide is Dual specificity protein kinase CLK2 (Clk2) (Mus musculus (Mouse)).